The primary structure comprises 393 residues: NAD(P)H-quinone oxidoreductase subunit H, chloroplastic (393 aa).

The protein belongs to the complex I 49 kDa subunit family. As to quaternary structure, NDH is composed of at least 16 different subunits, 5 of which are encoded in the nucleus.

The protein localises to the plastid. It is found in the chloroplast thylakoid membrane. It catalyses the reaction a plastoquinone + NADH + (n+1) H(+)(in) = a plastoquinol + NAD(+) + n H(+)(out). It carries out the reaction a plastoquinone + NADPH + (n+1) H(+)(in) = a plastoquinol + NADP(+) + n H(+)(out). Functionally, NDH shuttles electrons from NAD(P)H:plastoquinone, via FMN and iron-sulfur (Fe-S) centers, to quinones in the photosynthetic chain and possibly in a chloroplast respiratory chain. The immediate electron acceptor for the enzyme in this species is believed to be plastoquinone. Couples the redox reaction to proton translocation, and thus conserves the redox energy in a proton gradient. The chain is NAD(P)H-quinone oxidoreductase subunit H, chloroplastic from Morus indica (Mulberry).